Here is a 267-residue protein sequence, read N- to C-terminus: Inositol-1-monophosphatase (267 aa).

4 residues coordinate Mg(2+): Glu-66, Asp-84, Leu-86, and Asp-87. Residue Glu-66 participates in substrate binding. Substrate is bound by residues 86 to 89 (LDGS), Arg-182, and Asp-213. A Mg(2+)-binding site is contributed by Asp-213.

The protein belongs to the inositol monophosphatase superfamily. Requires Mg(2+) as cofactor.

It catalyses the reaction a myo-inositol phosphate + H2O = myo-inositol + phosphate. The chain is Inositol-1-monophosphatase (suhB) from Aeropyrum pernix (strain ATCC 700893 / DSM 11879 / JCM 9820 / NBRC 100138 / K1).